The sequence spans 404 residues: Methionine aminopeptidase 1D, mitochondrial (404 aa).

Residues 1–58 constitute a mitochondrion transit peptide; it reads MNKILKNIINKSSINNVFKTSFNGGISSSSSSSSSYLNNNNNIIKSYNVQQKQQQRYY. Positions 86-109 are disordered; that stretch reads VRSQRLTKKTASPLEGMNRKERRK. His-232 lines the substrate pocket. Positions 249, 260, and 323 each coordinate a divalent metal cation. His-330 is a substrate binding site. 2 residues coordinate a divalent metal cation: Glu-355 and Glu-389.

This sequence belongs to the peptidase M24A family. Methionine aminopeptidase type 1 subfamily. Co(2+) is required as a cofactor. Zn(2+) serves as cofactor. It depends on Mn(2+) as a cofactor. Requires Fe(2+) as cofactor.

It localises to the mitochondrion. The enzyme catalyses Release of N-terminal amino acids, preferentially methionine, from peptides and arylamides.. Its function is as follows. Removes the N-terminal methionine from nascent proteins. The N-terminal methionine is often cleaved when the second residue in the primary sequence is small and uncharged (Met-Ala-, Cys, Gly, Pro, Ser, Thr, or Val). The protein is Methionine aminopeptidase 1D, mitochondrial (metap1d) of Dictyostelium discoideum (Social amoeba).